The chain runs to 336 residues: 3-isopropylmalate dehydrogenase (336 aa).

Residues R87, R97, R121, and D211 each contribute to the substrate site. 3 residues coordinate Mg(2+): D211, D235, and D239. 271 to 283 (GSAPDIAGQGIAD) is a binding site for NAD(+).

It belongs to the isocitrate and isopropylmalate dehydrogenases family. LeuB type 2 subfamily. As to quaternary structure, homodimer. Mg(2+) serves as cofactor. Mn(2+) is required as a cofactor.

The protein localises to the cytoplasm. It carries out the reaction (2R,3S)-3-isopropylmalate + NAD(+) = 4-methyl-2-oxopentanoate + CO2 + NADH. Its pathway is amino-acid biosynthesis; L-leucine biosynthesis; L-leucine from 3-methyl-2-oxobutanoate: step 3/4. Catalyzes the oxidation of 3-carboxy-2-hydroxy-4-methylpentanoate (3-isopropylmalate) to 3-carboxy-4-methyl-2-oxopentanoate. The product decarboxylates to 4-methyl-2 oxopentanoate. In Rhodococcus jostii (strain RHA1), this protein is 3-isopropylmalate dehydrogenase.